A 357-amino-acid chain; its full sequence is Chorismate synthase (357 aa).

Residue Arg-46 participates in NADP(+) binding. Residues Arg-123–Ser-125, Asn-235–Ala-236, Gly-275, Lys-290–Ser-294, and Arg-316 contribute to the FMN site.

The protein belongs to the chorismate synthase family. As to quaternary structure, homotetramer. FMNH2 is required as a cofactor.

It catalyses the reaction 5-O-(1-carboxyvinyl)-3-phosphoshikimate = chorismate + phosphate. Its pathway is metabolic intermediate biosynthesis; chorismate biosynthesis; chorismate from D-erythrose 4-phosphate and phosphoenolpyruvate: step 7/7. Its function is as follows. Catalyzes the anti-1,4-elimination of the C-3 phosphate and the C-6 proR hydrogen from 5-enolpyruvylshikimate-3-phosphate (EPSP) to yield chorismate, which is the branch point compound that serves as the starting substrate for the three terminal pathways of aromatic amino acid biosynthesis. This reaction introduces a second double bond into the aromatic ring system. This is Chorismate synthase from Sulfurovum sp. (strain NBC37-1).